The sequence spans 531 residues: Importin subunit alpha-3 (531 aa).

One can recognise an IBB domain in the interval 1-58 (MSLRPSAKTEVRRNRYKVAVDAEEGRRRREDNLVEIRKNKREENLQKKRFTSSMAFGS). ARM repeat units lie at residues 111–153 (INEV…TSEN), 154–198 (TNVI…CRDL), 199–236 (VLSY…RGKP), 237–281 (PPAF…DKIQ), 282–321 (AVIE…DDLQ), 322–364 (TQMV…NADQ), 365–405 (IQAV…GGTH), and 406–447 (DQIK…VVGE). A disordered region spans residues 500–524 (DNEEEGNDENHAPQSGFQFGSTNVP). Positions 511–524 (APQSGFQFGSTNVP) are enriched in polar residues.

The protein belongs to the importin alpha family. As to quaternary structure, forms a complex with importin subunit beta-1. Interacts with PRL1. Interacts with A.tumefaciens VirD2 and VirE2.

Its subcellular location is the nucleus. Binds to conventional NLS motifs and mediates nuclear protein import across the nuclear envelope. Acts as a cellular receptor for the nuclear import of the virD2 protein of Agrobacterium, but is not essential for Agrobacterium-mediated root transformation. May be involved in the regulation of pathogen-induced salicylic acid accumulation. The polypeptide is Importin subunit alpha-3 (Arabidopsis thaliana (Mouse-ear cress)).